A 165-amino-acid polypeptide reads, in one-letter code: 2-C-methyl-D-erythritol 2,4-cyclodiphosphate synthase (165 aa).

Residues Asp11 and His13 each coordinate a divalent metal cation. Residues 11 to 13 and 40 to 41 contribute to the 4-CDP-2-C-methyl-D-erythritol 2-phosphate site; these read DVH and HS. An a divalent metal cation-binding site is contributed by His48. 4-CDP-2-C-methyl-D-erythritol 2-phosphate is bound by residues 62–64, 67–71, 137–140, Phe144, and Arg147; these read DIG, FPDTD, and TTSE.

The protein belongs to the IspF family. Homotrimer. Requires a divalent metal cation as cofactor.

It carries out the reaction 4-CDP-2-C-methyl-D-erythritol 2-phosphate = 2-C-methyl-D-erythritol 2,4-cyclic diphosphate + CMP. It functions in the pathway isoprenoid biosynthesis; isopentenyl diphosphate biosynthesis via DXP pathway; isopentenyl diphosphate from 1-deoxy-D-xylulose 5-phosphate: step 4/6. In terms of biological role, involved in the biosynthesis of isopentenyl diphosphate (IPP) and dimethylallyl diphosphate (DMAPP), two major building blocks of isoprenoid compounds. Catalyzes the conversion of 4-diphosphocytidyl-2-C-methyl-D-erythritol 2-phosphate (CDP-ME2P) to 2-C-methyl-D-erythritol 2,4-cyclodiphosphate (ME-CPP) with a corresponding release of cytidine 5-monophosphate (CMP). The polypeptide is 2-C-methyl-D-erythritol 2,4-cyclodiphosphate synthase (Rubrobacter xylanophilus (strain DSM 9941 / JCM 11954 / NBRC 16129 / PRD-1)).